Reading from the N-terminus, the 332-residue chain is MKVTFEQLKAAFNRVLISRGVDSETADACAEMFARTTESGVYSHGVNRFPRFIQQLENGDIIPDAQPKRITSLGAIEQWDAQRSIGNLTAKKMMDRAIELAADHGIGLVALRNANHWMRGGSYGWQAAEKGYIGICWTNSIAVMPPWGAKECRIGTNPLIVAIPSTPITMVDMSMSMFSYGMLEVNRLAGRQLPVDGGFDDEGNLTKEPGVIEKNRRILPMGYWKGSGMSIVLDMIATLLSDGASVAEVTQDNSDEYGVSQIFIAIEVDKLIDGPTRDAKLQRIMDYVTTAERADENQAIRLPGHEFTTLLAENRRNGITVDDSVWAKIQAL.

Catalysis depends on H44, which acts as the Proton donor. NAD(+)-binding positions include 168–174 (ITMVDMS), 224–225 (WK), and 304–306 (GHE).

The protein belongs to the LDH2/MDH2 oxidoreductase family. DlgD subfamily. As to quaternary structure, homodimer.

Its subcellular location is the cytoplasm. It catalyses the reaction 3-dehydro-L-gulonate + NAD(+) = 2,3-dioxo-L-gulonate + NADH + H(+). The enzyme catalyses 3-dehydro-L-gulonate + NADP(+) = 2,3-dioxo-L-gulonate + NADPH + H(+). Its function is as follows. Catalyzes the reduction of 2,3-diketo-L-gulonate in the presence of NADH, to form 3-keto-L-gulonate. The polypeptide is 2,3-diketo-L-gulonate reductase (Escherichia coli (strain SMS-3-5 / SECEC)).